The following is a 240-amino-acid chain: MATLFIADLHLQTEEPAIVAGFLRFLAVEARQADALYILGDLFEAWIGDDDPNPLHREMAVAIKSLVDSGVPCFFIHGNRDFLIGKRFARESGMTLLPQEKVLDLYGRNVLIMHGDTLCTDDAGYQAFRAKVHNPWVQRLFLTLPLFIRRRIAARLRAGSKAANSSKSLDIMDVNAQTVVAEMEKHRVQWLIHGHTHRPAVHELSANGQPAFRVVLGAWHHEGSMVKVTPDNVELIAFPL.

5 residues coordinate Mn(2+): Asp8, His10, Asp41, Asn79, and His114. Residue 79-80 (NR) coordinates substrate. 5 residues coordinate substrate: Asp122, Ser160, Asn164, Lys167, and His195. Residues His195 and His197 each coordinate Mn(2+).

This sequence belongs to the LpxH family. Mn(2+) serves as cofactor.

It is found in the cell inner membrane. It catalyses the reaction UDP-2-N,3-O-bis[(3R)-3-hydroxytetradecanoyl]-alpha-D-glucosamine + H2O = 2-N,3-O-bis[(3R)-3-hydroxytetradecanoyl]-alpha-D-glucosaminyl 1-phosphate + UMP + 2 H(+). Its pathway is glycolipid biosynthesis; lipid IV(A) biosynthesis; lipid IV(A) from (3R)-3-hydroxytetradecanoyl-[acyl-carrier-protein] and UDP-N-acetyl-alpha-D-glucosamine: step 4/6. Its function is as follows. Hydrolyzes the pyrophosphate bond of UDP-2,3-diacylglucosamine to yield 2,3-diacylglucosamine 1-phosphate (lipid X) and UMP by catalyzing the attack of water at the alpha-P atom. Involved in the biosynthesis of lipid A, a phosphorylated glycolipid that anchors the lipopolysaccharide to the outer membrane of the cell. This Salmonella arizonae (strain ATCC BAA-731 / CDC346-86 / RSK2980) protein is UDP-2,3-diacylglucosamine hydrolase.